The following is a 226-amino-acid chain: MGIRAIVVDTAGTTTDLNFIQQTLFPYSAKVMADFLREHQHNPLVDYCIGDVRDIALETDADIDRVAEILVQWIAEDRKVTPLKTLQGLIWKQGYANDEFKGHIYPDFIDAIKTYRAQGLRVYSFSSGSVDAQKLLFSHSDSGDLTELFNGHFDTRTGNKLDKQAYANIVNTISLTPRQILFVSDVVEELKAAEAAGMITCQMVREPSQRTGKYRIIQSFSELNFE.

This sequence belongs to the HAD-like hydrolase superfamily. MasA/MtnC family. In terms of assembly, monomer. Requires Mg(2+) as cofactor.

It carries out the reaction 5-methylsulfanyl-2,3-dioxopentyl phosphate + H2O = 1,2-dihydroxy-5-(methylsulfanyl)pent-1-en-3-one + phosphate. The protein operates within amino-acid biosynthesis; L-methionine biosynthesis via salvage pathway; L-methionine from S-methyl-5-thio-alpha-D-ribose 1-phosphate: step 3/6. Its pathway is amino-acid biosynthesis; L-methionine biosynthesis via salvage pathway; L-methionine from S-methyl-5-thio-alpha-D-ribose 1-phosphate: step 4/6. In terms of biological role, bifunctional enzyme that catalyzes the enolization of 2,3-diketo-5-methylthiopentyl-1-phosphate (DK-MTP-1-P) into the intermediate 2-hydroxy-3-keto-5-methylthiopentenyl-1-phosphate (HK-MTPenyl-1-P), which is then dephosphorylated to form the acireductone 1,2-dihydroxy-3-keto-5-methylthiopentene (DHK-MTPene). The sequence is that of Enolase-phosphatase E1 from Shewanella amazonensis (strain ATCC BAA-1098 / SB2B).